Consider the following 90-residue polypeptide: Small ribosomal subunit protein bS18 (90 aa).

It belongs to the bacterial ribosomal protein bS18 family. In terms of assembly, part of the 30S ribosomal subunit. Forms a tight heterodimer with protein bS6.

In terms of biological role, binds as a heterodimer with protein bS6 to the central domain of the 16S rRNA, where it helps stabilize the platform of the 30S subunit. This chain is Small ribosomal subunit protein bS18, found in Bordetella avium (strain 197N).